We begin with the raw amino-acid sequence, 354 residues long: MTDLKNDRYLRALLRQPVDVTPVWMMRQAGRYLPEYKATRAQAGDFMSLCKNAELACEVTLQPLRRYALDAAILFSDILTIPDAMGLGLYFEAGEGPRFHSPITSHADVVNLPIPDPEQELGYVMNAVRTIRKNLAGEVPLIGFSGSPWTLATYMVEGGSSKAFTVIKKMMFAEPKTLHLLLDKLADSVILYLNAQIRAGAQAVMVFDTWGGALSGRDYKEFSLRYMHKIVDGLQRENEGRRVPVTLFTKGGGQWLEAMAETGCDALGLDWTSDIADARRRVGDKVALQGNMDPSMLYADPARIEQEVASILAGFGQGNGHVFNLGHGIHQDVPPEHAGVFVEAVHRLSRPYHA.

Substrate-binding positions include 27-31, D77, Y154, T209, and H327; that span reads RQAGR.

This sequence belongs to the uroporphyrinogen decarboxylase family. As to quaternary structure, homodimer.

It localises to the cytoplasm. The enzyme catalyses uroporphyrinogen III + 4 H(+) = coproporphyrinogen III + 4 CO2. Its pathway is porphyrin-containing compound metabolism; protoporphyrin-IX biosynthesis; coproporphyrinogen-III from 5-aminolevulinate: step 4/4. Functionally, catalyzes the decarboxylation of four acetate groups of uroporphyrinogen-III to yield coproporphyrinogen-III. In Pectobacterium carotovorum subsp. carotovorum (strain PC1), this protein is Uroporphyrinogen decarboxylase.